The chain runs to 392 residues: Putative nickel insertion protein (392 aa).

It belongs to the LarC family.

The sequence is that of Putative nickel insertion protein from Methanothrix thermoacetophila (strain DSM 6194 / JCM 14653 / NBRC 101360 / PT) (Methanosaeta thermophila).